Reading from the N-terminus, the 899-residue chain is Bifunctional uridylyltransferase/uridylyl-removing enzyme (899 aa).

The tract at residues 1–342 (MPQVDPDLFD…PGDAAGRVEP (342 aa)) is uridylyltransferase. The segment at 343-705 (LNERFQVRDG…TTQREFEGAT (363 aa)) is uridylyl-removing. Residues 461–583 (VDAHTLNLIK…VRDQTYLDYL (123 aa)) form the HD domain. ACT domains are found at residues 706–789 (QIFI…IIQR) and 816–899 (ILEI…RISI).

This sequence belongs to the GlnD family. The cofactor is Mg(2+).

It catalyses the reaction [protein-PII]-L-tyrosine + UTP = [protein-PII]-uridylyl-L-tyrosine + diphosphate. The enzyme catalyses [protein-PII]-uridylyl-L-tyrosine + H2O = [protein-PII]-L-tyrosine + UMP + H(+). Uridylyltransferase (UTase) activity is inhibited by glutamine, while glutamine activates uridylyl-removing (UR) activity. Modifies, by uridylylation and deuridylylation, the PII regulatory proteins (GlnB and homologs), in response to the nitrogen status of the cell that GlnD senses through the glutamine level. Under low glutamine levels, catalyzes the conversion of the PII proteins and UTP to PII-UMP and PPi, while under higher glutamine levels, GlnD hydrolyzes PII-UMP to PII and UMP (deuridylylation). Thus, controls uridylylation state and activity of the PII proteins, and plays an important role in the regulation of nitrogen fixation and metabolism. This is Bifunctional uridylyltransferase/uridylyl-removing enzyme from Azotobacter vinelandii (strain DJ / ATCC BAA-1303).